The primary structure comprises 79 residues: Small ribosomal subunit protein bS18 (79 aa).

The protein belongs to the bacterial ribosomal protein bS18 family. As to quaternary structure, part of the 30S ribosomal subunit. Forms a tight heterodimer with protein bS6.

Its function is as follows. Binds as a heterodimer with protein bS6 to the central domain of the 16S rRNA, where it helps stabilize the platform of the 30S subunit. This is Small ribosomal subunit protein bS18 from Nitrobacter winogradskyi (strain ATCC 25391 / DSM 10237 / CIP 104748 / NCIMB 11846 / Nb-255).